A 1462-amino-acid polypeptide reads, in one-letter code: DNA polymerase alpha catalytic subunit (1462 aa).

Disordered stretches follow at residues 1–33 (MAPV…GRQE) and 98–123 (DLED…KRNV). The segment covering 20–29 (RARREKKSKK) has biased composition (basic residues). Over residues 106–116 (ADEKGKDGKAR) the composition is skewed to basic and acidic residues. Residue threonine 174 is modified to Phosphothreonine. Serine 186, serine 190, and serine 209 each carry phosphoserine. Position 224 is an N6-acetyllysine (lysine 224). Residues 232–251 (DVQVESTEEEQESGAMEFED) are disordered. Threonine 406 carries the phosphothreonine modification. The segment at 650–715 (RINVCKAPHW…YHLSELVQQI (66 aa)) is DNA-binding. Lysine 970 carries the N6-succinyllysine modification. The DNA-binding stretch occupies residues 1245-1376 (QFRVHHYHKD…TGPLCPACMK (132 aa)). Cysteine 1283, cysteine 1286, cysteine 1310, cysteine 1315, cysteine 1348, cysteine 1353, cysteine 1371, and cysteine 1374 together coordinate Zn(2+). The segment at 1283–1318 (CPTCGTENIYDNVFDGSGTDMEPSLYRCSNIDCKAS) adopts a CysA-type zinc-finger fold. Residues 1348–1374 (CEEPTCRNRTRHLPLQFSRTGPLCPAC) carry the CysB motif motif.

Belongs to the DNA polymerase type-B family. As to quaternary structure, component of the alpha DNA polymerase complex (also known as the alpha DNA polymerase-primase complex) consisting of four subunits: the catalytic subunit POLA1, the regulatory subunit POLA2, and the primase complex subunits PRIM1 and PRIM2 respectively. Interacts with PARP1; this interaction functions as part of the control of replication fork progression. Interacts with MCM10 and WDHD1; these interactions recruit the polymerase alpha complex to the pre-replicative complex bound to DNA. Interacts with RPA1; this interaction stabilizes the replicative complex and reduces the misincorporation rate of DNA polymerase alpha by acting as a fidelity clamp. In terms of assembly, (Microbial infection) Interacts with SV40 Large T antigen; this interaction allows viral DNA replication. (Microbial infection) Interacts with herpes simplex virus 1/HHV-1 replication origin-binding protein UL9. A 165 kDa form is probably produced by proteolytic cleavage at Lys-124.

It is found in the nucleus. Its subcellular location is the cytoplasm. The protein resides in the cytosol. It carries out the reaction DNA(n) + a 2'-deoxyribonucleoside 5'-triphosphate = DNA(n+1) + diphosphate. With respect to regulation, autoinhibited in apo-primosome, where the zinc motif of POLA1 and oligonucleotide/olicosaccharide-binding domain of POLA2 are placed into the active site blocking RNA:DNA duplex entry. Functionally, catalytic subunit of the DNA polymerase alpha complex (also known as the alpha DNA polymerase-primase complex) which plays an essential role in the initiation of DNA synthesis. During the S phase of the cell cycle, the DNA polymerase alpha complex (composed of a catalytic subunit POLA1, a regulatory subunit POLA2 and two primase subunits PRIM1 and PRIM2) is recruited to DNA at the replicative forks via direct interactions with MCM10 and WDHD1. The primase subunit of the polymerase alpha complex initiates DNA synthesis by oligomerising short RNA primers on both leading and lagging strands. These primers are initially extended by the polymerase alpha catalytic subunit and subsequently transferred to polymerase delta and polymerase epsilon for processive synthesis on the lagging and leading strand, respectively. The reason this transfer occurs is because the polymerase alpha has limited processivity and lacks intrinsic 3' exonuclease activity for proofreading error, and therefore is not well suited for replicating long complexes. In the cytosol, responsible for a substantial proportion of the physiological concentration of cytosolic RNA:DNA hybrids, which are necessary to prevent spontaneous activation of type I interferon responses. This Homo sapiens (Human) protein is DNA polymerase alpha catalytic subunit (POLA1).